The following is a 745-amino-acid chain: uncharacterized protein (745 aa).

Residues 158–256 (NQVCDYIELH…HQTPKQYRGD (99 aa)) form the HTH araC/xylS-type domain. 2 DNA-binding regions (H-T-H motif) span residues 175–196 (SELS…TESL) and 223–246 (ITDI…KHFT).

This is an uncharacterized protein from Staphylococcus aureus (strain COL).